The chain runs to 240 residues: Ubiquinone biosynthesis O-methyltransferase (240 aa).

S-adenosyl-L-methionine-binding residues include arginine 44, glycine 64, aspartate 85, and methionine 129.

The protein belongs to the methyltransferase superfamily. UbiG/COQ3 family.

It carries out the reaction a 3-demethylubiquinol + S-adenosyl-L-methionine = a ubiquinol + S-adenosyl-L-homocysteine + H(+). The catalysed reaction is a 3-(all-trans-polyprenyl)benzene-1,2-diol + S-adenosyl-L-methionine = a 2-methoxy-6-(all-trans-polyprenyl)phenol + S-adenosyl-L-homocysteine + H(+). Its pathway is cofactor biosynthesis; ubiquinone biosynthesis. In terms of biological role, O-methyltransferase that catalyzes the 2 O-methylation steps in the ubiquinone biosynthetic pathway. This Escherichia coli O127:H6 (strain E2348/69 / EPEC) protein is Ubiquinone biosynthesis O-methyltransferase.